Consider the following 370-residue polypeptide: Protein RKD5 (370 aa).

The disordered stretch occupies residues 193–232 (DSETESEESVNEKTEHSEFENDKTEQSESDAKTEILKKKK). Positions 202-228 (VNEKTEHSEFENDKTEQSESDAKTEIL) are enriched in basic and acidic residues. Residues 224–309 (KTEILKKKKR…AEKQQEKNEA (86 aa)) form the RWP-RK domain. Residues 283 to 328 (HRKIKSLDCLIHDLQREAEKQQEKNEAAAMAVAKKQEKLETEKRNI) are a coiled coil. The segment at 347-370 (NFKKRHRASRAKKNQESLVTSSST) is disordered. A compositionally biased stretch (basic residues) spans 349–358 (KKRHRASRAK).

It localises to the nucleus. In terms of biological role, putative transcription factor. The protein is Protein RKD5 (RKD5) of Arabidopsis thaliana (Mouse-ear cress).